The sequence spans 61 residues: Small ribosomal subunit protein uS14B (61 aa).

Positions 24, 27, 40, and 43 each coordinate Zn(2+).

It belongs to the universal ribosomal protein uS14 family. Zinc-binding uS14 subfamily. As to quaternary structure, part of the 30S ribosomal subunit. Contacts proteins S3 and S10. Zn(2+) is required as a cofactor.

Its function is as follows. Binds 16S rRNA, required for the assembly of 30S particles and may also be responsible for determining the conformation of the 16S rRNA at the A site. The sequence is that of Small ribosomal subunit protein uS14B from Mycobacterium ulcerans (strain Agy99).